A 513-amino-acid polypeptide reads, in one-letter code: Putative BTB/POZ domain-containing protein L55 (513 aa).

The BTB domain maps to 11 to 83 (SPIKIILQDI…FHGYKMEISD (73 aa)).

The protein belongs to the mimivirus BTB/WD family.

The polypeptide is Putative BTB/POZ domain-containing protein L55 (Acanthamoeba polyphaga (Amoeba)).